A 314-amino-acid chain; its full sequence is Taste receptor type 2 member 42 (314 aa).

The Extracellular segment spans residues 1–7; that stretch reads MATELDK. The helical transmembrane segment at 8–28 threads the bilayer; that stretch reads IFLILEIAEFIIGMLGNVFIG. Residues 29–50 lie on the Cytoplasmic side of the membrane; the sequence is LVNCSEGIKNQKVFSADFILTC. The chain crosses the membrane as a helical span at residues 51 to 71; sequence LAISTIGQLFVILFDSFLVGL. Over 72–101 the chain is Extracellular; it reads ASHLYTTYRLGKPVIMLWHMTNHLTTWLAT. A helical membrane pass occupies residues 102-122; sequence CLSIFYFFKIAHFPHSLFLWL. Topologically, residues 123-127 are cytoplasmic; that stretch reads RWRMN. Residues 128–148 traverse the membrane as a helical segment; sequence GMIVMLLILSLFLLIFDSLVL. Residues 149 to 187 are Extracellular-facing; it reads EIFIDISLNIIDKSNLTLYLDESKTLYDKLSILKTLLSL. Asparagine 163 carries an N-linked (GlcNAc...) asparagine glycan. The helical transmembrane segment at 188-208 threads the bilayer; the sequence is TSFIPFSLSLTSLLFFFLSLV. Over 209–238 the chain is Cytoplasmic; that stretch reads RHTRNLKLSSLGSRDSSTEAHRRAMKMVMS. The helical transmembrane segment at 239–259 threads the bilayer; sequence FLFLFIVHFFSLQVANWIFFM. Topologically, residues 260-265 are extracellular; it reads LWNNKY. A helical transmembrane segment spans residues 266 to 286; that stretch reads IKFAMLALNAFPSCHSFILIL. The Cytoplasmic segment spans residues 287 to 314; that stretch reads GNSKLRQTAVRLLWHLRNYTKTPNALPL.

Belongs to the G-protein coupled receptor T2R family.

The protein resides in the membrane. Receptor that may play a role in the perception of bitterness and is gustducin-linked. May play a role in sensing the chemical composition of the gastrointestinal content. The activity of this receptor may stimulate alpha gustducin, mediate PLC-beta-2 activation and lead to the gating of TRPM5. This is Taste receptor type 2 member 42 (TAS2R42) from Pan paniscus (Pygmy chimpanzee).